Here is a 244-residue protein sequence, read N- to C-terminus: Small ribosomal subunit protein eS6 (244 aa).

The disordered stretch occupies residues Arg185–Ala244. The span at Leu186–Ala201 shows a compositional bias: basic residues. A compositionally biased stretch (basic and acidic residues) spans Ser231–Ala244.

The protein belongs to the eukaryotic ribosomal protein eS6 family. Post-translationally, ribosomal protein S6 is the major substrate of protein kinases in eukaryote ribosomes.

Functionally, component of the 40S small ribosomal subunit. Plays an important role in controlling cell growth and proliferation through the selective translation of particular classes of mRNA. In Branchiostoma floridae (Florida lancelet), this protein is Small ribosomal subunit protein eS6 (RPS6).